Here is an 835-residue protein sequence, read N- to C-terminus: Probable RNA-directed RNA polymerase (835 aa).

It belongs to the totiviridae RNA-directed RNA polymerase family.

The enzyme catalyses RNA(n) + a ribonucleoside 5'-triphosphate = RNA(n+1) + diphosphate. Its function is as follows. RNA-dependent RNA polymerase which replicates the viral genome. Catalyzes the transcription of fully conservative plus-strand genomic RNAs that are extruded from the virion into the cytoplasm where they function as mRNAs for translation of viral proteins and also as substrates for encapsidation to form new virions. Once encapsidated, the positive strand is converted to dsRNA by the RNA-directed RNA polymerase. This is Probable RNA-directed RNA polymerase from Helminthosporium victoriae virus-190S (Hv190SV).